A 14507-amino-acid chain; its full sequence is Mucin-16 (14507 aa).

Over residues 1–17 (MLKPSGLPGSSSPTRSL) the composition is skewed to low complexity. A disordered region spans residues 1–138 (MLKPSGLPGS…PRTRTSSTEG (138 aa)). The Extracellular segment spans residues 1 to 14451 (MLKPSGLPGS…EPLTGNSDLP (14451 aa)). 2 stretches are compositionally biased toward polar residues: residues 35 to 46 (TGATLSPKTSTG) and 56 to 138 (PFTS…STEG). N139 is a glycosylation site (N-linked (GlcNAc...) asparagine). 7 disordered regions span residues 160-180 (EKYT…ETPW), 198-229 (DSTA…TNPS), 265-287 (FSSP…LSSS), 396-554 (LGGT…STSV), 655-674 (VSKT…SYTM), 695-719 (SLGL…GHTK), and 740-888 (TSTF…RTTL). A compositionally biased stretch (low complexity) spans 166–178 (TETSTTEGDSTET). A compositionally biased stretch (polar residues) spans 212-229 (PAETTVTDSHTPGRTNPS). Composition is skewed to low complexity over residues 276-287 (SRISTSAPLSSS) and 396-413 (LGGT…STTL). Composition is skewed to polar residues over residues 414–423 (VSEETNTHHS), 431–441 (GTLNTSMTPLE), and 460–478 (GFTT…SSSH). The N-linked (GlcNAc...) asparagine glycan is linked to N434. Low complexity-rich tracts occupy residues 485 to 497 (TTGS…SSST) and 508 to 525 (ATTS…ESTA). A compositionally biased stretch (polar residues) spans 526–543 (QQFSEPQHTQWVETSPSM). Polar residues-rich tracts occupy residues 696 to 706 (LGLTPLNTRHP), 740 to 780 (TSTF…NAAT), 787 to 796 (NATSPLTHPS), and 805 to 821 (SVLT…SPNI). A glycan (N-linked (GlcNAc...) asparagine) is linked at N787. The segment covering 823 to 846 (PTGTLTSESSESPSTLSLPSVSGV) has biased composition (low complexity). 2 stretches are compositionally biased toward polar residues: residues 847-860 (KTTF…THLF) and 869-888 (TSNP…RTTL). Residues N930 and N957 are each glycosylated (N-linked (GlcNAc...) asparagine). Composition is skewed to polar residues over residues 949 to 969 (SQTN…TWPE), 1092 to 1101 (GSSTPGRTSQ), 1124 to 1137 (GTSS…TATH), and 1301 to 1317 (SGSS…NTGS). Disordered stretches follow at residues 949–981 (SQTN…LPSA), 1082–1101 (VSPS…RTSQ), 1121–1149 (PRDG…ARST), 1301–1378 (SGSS…NLTS), 1593–1641 (LGTQ…SSSS), and 1704–1757 (LSES…SPTT). The span at 1318–1328 (TWDPTTYITTT) shows a compositional bias: low complexity. 5 stretches are compositionally biased toward polar residues: residues 1334–1347 (SSAQ…VRTL), 1368–1378 (PKISSSPNLTS), 1596–1613 (QGRS…STDT), 1621–1633 (GPTN…PMDN), and 1704–1745 (LSES…GSQM). Residue N1375 is glycosylated (N-linked (GlcNAc...) asparagine). N-linked (GlcNAc...) asparagine glycosylation is present at N1633. The span at 1746 to 1757 (STSIPLTSSPTT) shows a compositional bias: low complexity. N1840, N1877, and N1890 each carry an N-linked (GlcNAc...) asparagine glycan. Polar residues predominate over residues 1846–1908 (DLSHGVHTSS…TEKSEVSSSI (63 aa)). 4 disordered regions span residues 1846–1930 (DLSH…PGNR), 2010–2033 (VSAS…YSSA), 2064–2140 (WPST…GASI), and 2153–2177 (RSDV…SAGT). 2 stretches are compositionally biased toward low complexity: residues 2019–2033 (SVSS…YSSA) and 2064–2085 (WPST…NPSS). The span at 2111-2132 (HGPQNTAASTLNTDASSVTGLS) shows a compositional bias: polar residues. Residues N2345 and N2375 are each glycosylated (N-linked (GlcNAc...) asparagine). 2 disordered regions span residues 2393–2455 (PTSI…PFTI) and 2566–2591 (SESK…ETSA). Composition is skewed to low complexity over residues 2417–2429 (TSTT…TSPS) and 2566–2583 (SESK…TPTS). N2737 carries N-linked (GlcNAc...) asparagine glycosylation. 10 disordered regions span residues 2789–2822 (TTGS…LTMN), 2838–2885 (TATQ…TWGI), 2901–3006 (DTKS…AMTS), 3019–3052 (TGQA…TSRK), 3083–3148 (TLNM…ASSI), 3172–3235 (SQAA…PETT), 3251–3276 (ALGS…PTEN), 3299–3392 (GTPG…KTET), 3415–3436 (TSRS…TSGS), and 3462–3491 (VSLP…VTSP). The segment covering 2803–2819 (SGSTHSTGTKTFSSLPL) has biased composition (polar residues). The segment covering 2864–2875 (SASSSPSKAFAS) has biased composition (low complexity). Composition is skewed to polar residues over residues 2876–2885 (LTTAPPTWGI) and 2901–2918 (DTKS…NTIP). Residues 2919–2931 (DSDASTASSSLSK) are compositionally biased toward low complexity. Residues 2942 to 2968 (MTSTKAISASSFQSTGFTETPEGSASP) show a composition bias toward polar residues. Low complexity predominate over residues 3019–3035 (TGQAARSGSSSSPISLS). Positions 3041-3052 (SFLSPTASTSRK) are enriched in polar residues. A glycan (N-linked (GlcNAc...) asparagine) is linked at N3085. The span at 3107–3116 (TAETQTLTFT) shows a compositional bias: low complexity. 2 stretches are compositionally biased toward polar residues: residues 3117-3132 (PSET…SPTE) and 3172-3181 (SQAAQGNSTW). N3178 carries an N-linked (GlcNAc...) asparagine glycan. Low complexity predominate over residues 3188–3200 (TGSSPAGTSPGSP). Polar residues-rich tracts occupy residues 3201–3214 (EMST…SKEP) and 3251–3261 (ALGSGSTSISH). Over residues 3263-3274 (PTGTTSPTKSPT) the composition is skewed to low complexity. Composition is skewed to polar residues over residues 3299–3342 (GTPG…TTGM) and 3360–3383 (VSLS…SSLT). Low complexity-rich tracts occupy residues 3424–3436 (SSTS…TSGS) and 3477–3491 (PSGG…VTSP). N-linked (GlcNAc...) asparagine glycosylation occurs at N3501. Residues 3538–3555 (ISTTITTMGTNSISTTTP) show a composition bias toward low complexity. Disordered stretches follow at residues 3538–3588 (ISTT…STAA), 3644–3672 (TPSS…TAST), 3794–3829 (RSSG…GQVP), 3843–3879 (AKTP…TPSA), 3914–3982 (LESG…SPVV), 4024–4056 (MDTS…SSKR), 4094–4121 (AMQT…WTGT), and 4138–4166 (FSKG…VPIH). 2 stretches are compositionally biased toward polar residues: residues 3812-3824 (QTST…TSAH) and 3848-3868 (ATFQ…TSDS). Positions 3916-3927 (SGTTSSPSWKSS) are enriched in low complexity. Positions 3946-3982 (PSTNTVETTGWVTSSEHASHSTIPAHSASSKLTSPVV) are enriched in polar residues. The span at 4026-4041 (TSSTTQTSIISSPGST) shows a compositional bias: low complexity. A compositionally biased stretch (polar residues) spans 4095–4121 (MQTSPPGATSLSAPTLDTSATASWTGT). Low complexity predominate over residues 4152 to 4164 (SVEETSSSSSLVP). N4220, N4498, N4606, N4613, and N4624 each carry an N-linked (GlcNAc...) asparagine glycan. Disordered regions lie at residues 4728–4748 (VKDV…PSSQ), 4845–4961 (HSTV…TRLS), and 5026–5066 (VSWT…KLSS). Residues 4856–4876 (KVTSPNVTTSTMEDTTISRSI) are compositionally biased toward polar residues. A glycan (N-linked (GlcNAc...) asparagine) is linked at N4861. Composition is skewed to low complexity over residues 4877-4914 (PKSS…ETST) and 4924-4939 (TTEV…SSTS). Composition is skewed to polar residues over residues 4944–4961 (DQST…TRLS) and 5026–5037 (VSWTSPPSVDKT). The segment covering 5038-5047 (SSPSSFLSSP) has biased composition (low complexity). Residues 5048–5059 (AMTTPSLISSTL) show a composition bias toward polar residues. N-linked (GlcNAc...) asparagine glycosylation is found at N5096, N5131, and N5228. 3 disordered regions span residues 5128-5149 (VKAN…ETPK), 5221-5249 (EVSS…DTFT), and 5271-5303 (TQAS…TVTQ). Residues 5221–5234 (EVSSTGVNSSSKIS) are compositionally biased toward polar residues. Over residues 5280–5293 (SHSTLPLDTSTTLS) the composition is skewed to low complexity. Residues 5294–5303 (QGGTHSTVTQ) are compositionally biased toward polar residues. Residue N5320 is glycosylated (N-linked (GlcNAc...) asparagine). Disordered regions lie at residues 5328-5365 (PVEE…PLPV), 5381-5400 (GTTS…SITH), 5426-5507 (NVGT…TNTA), 5519-5538 (ASRT…DRPT), 5624-5654 (PVEE…ESIP), 5675-5696 (LGTT…PTQE), and 5727-5747 (ISGH…KATS). 2 stretches are compositionally biased toward low complexity: residues 5333–5365 (SSVS…PLPV) and 5381–5393 (GTTS…SSPP). An N-linked (GlcNAc...) asparagine glycan is attached at N5394. Composition is skewed to polar residues over residues 5426 to 5441 (NVGT…SSVL) and 5447 to 5485 (SKAT…TASL). N5470 is a glycosylation site (N-linked (GlcNAc...) asparagine). 4 stretches are compositionally biased toward low complexity: residues 5495 to 5504 (SEKTSSTTET), 5520 to 5532 (SRTE…TSIS), 5633 to 5654 (SLMS…ESIP), and 5675 to 5688 (LGTT…SSPP). N5689 is a glycosylation site (N-linked (GlcNAc...) asparagine). The segment covering 5727 to 5737 (ISGHESQSSVP) has biased composition (polar residues). N5863 carries N-linked (GlcNAc...) asparagine glycosylation. Disordered stretches follow at residues 5882–5931 (STAS…SSPV) and 6054–6078 (STST…TPEL). A compositionally biased stretch (polar residues) spans 5903-5916 (TTTMSRSTKGVSWQ). A compositionally biased stretch (low complexity) spans 5917–5928 (SPPSVEETSSPS). The segment covering 6054–6063 (STSTPGSPET) has biased composition (polar residues). N-linked (GlcNAc...) asparagine glycosylation is present at N6088. Disordered stretches follow at residues 6122–6149 (PASA…PLTI), 6219–6251 (NSLS…LVSV), 6399–6425 (SRTE…DTST), 6438–6459 (TKSE…SQGT), 6497–6545 (ISGT…TSLP), and 6682–6714 (TTGA…PDIS). 3 stretches are compositionally biased toward low complexity: residues 6134–6149 (SPEA…PLTI), 6226–6251 (PLLV…LVSV), and 6399–6410 (SRTELTSSSRTS). Composition is skewed to polar residues over residues 6411-6425 (IQGT…DTST) and 6445-6459 (IATQ…SQGT). A compositionally biased stretch (low complexity) spans 6500–6523 (TSPPSVEKTSSSSSLLSLPAITSP). Polar residues-rich tracts occupy residues 6530-6545 (LPES…TSLP) and 6683-6699 (TGAT…SRRT). N6732 carries an N-linked (GlcNAc...) asparagine glycan. Disordered regions lie at residues 6800 to 6822 (SFSS…TLPK), 6845 to 6865 (TLGT…STSH), and 6886 to 6939 (TAAT…SETT). The span at 6848-6864 (TSPEPTTSSPPNLSSTS) shows a compositional bias: low complexity. N-linked (GlcNAc...) asparagine glycosylation is present at N6859. Residues 6886 to 6905 (TAATNVETTSSGHGSQSSVL) are compositionally biased toward polar residues. Residues 6919-6938 (TTSTMGHTTVSTSMSVSSET) are compositionally biased toward low complexity. N6961 carries an N-linked (GlcNAc...) asparagine glycan. Disordered regions lie at residues 6981–7004 (AEVS…QSTV), 7028–7107 (MTIP…ATTS), 7143–7208 (TSPE…TSKA), 7279–7302 (SRTE…MLPE), 7320–7345 (ESSE…TLDT), 7360–7427 (QRLP…SLLT), 7437–7456 (LDAS…STSV), 7463–7503 (EVTT…ETTK), 7527–7553 (SNTR…SEET), 7577–7597 (TEAI…TMSQ), 7726–7782 (ATTT…TTSS), 7825–7849 (LASS…TKMS), 7908–7927 (HTSP…TSST), and 7970–8000 (PSFS…SPLP). Polar residues predominate over residues 7028–7038 (MTIPTQTGPSG). A compositionally biased stretch (low complexity) spans 7039–7055 (STSQDTLTLDTSTTKSQ). The segment covering 7057 to 7075 (KTHSTLTQRFPHSEMTTLM) has biased composition (polar residues). Over residues 7086-7105 (SSPSLENPSSLPSLLSLPAT) the composition is skewed to low complexity. Positions 7166 to 7200 (GKDTTNTEAVHPSTNTAASNVEIPSSGHESPSSAL) are enriched in polar residues. The span at 7279 to 7298 (SRTEVTSSSRTSISGSAEST) shows a compositional bias: low complexity. Polar residues-rich tracts occupy residues 7322 to 7345 (SEMT…TLDT), 7360 to 7371 (QRLPHSEITTLV), and 7390 to 7402 (SPPS…SAMI). Composition is skewed to low complexity over residues 7403–7427 (SPSP…SLLT) and 7439–7455 (ASAE…SSTS). Over residues 7474–7484 (FSNTAVTKVGT) the composition is skewed to polar residues. Residues 7485 to 7494 (SSSGHESPSS) show a composition bias toward low complexity. Positions 7733 to 7749 (GTSTEPGTSSSSSLSTT) are enriched in low complexity. Basic and acidic residues predominate over residues 7750–7765 (SHERLTTYKDTAHTEA). Over residues 7768–7782 (PSTNTGGTNVATTSS) the composition is skewed to polar residues. Low complexity-rich tracts occupy residues 7835-7846 (ESSGSEGTSSGT), 7915-7927 (TTQG…TSST), and 7973-8000 (SLMS…SPLP). N-linked (GlcNAc...) asparagine glycosylation is found at N8029 and N8055. 8 disordered regions span residues 8042 to 8078 (EVTT…LADS), 8111 to 8134 (IQTE…GTSL), 8312 to 8331 (GISR…TSHE), 8342 to 8389 (TEDM…YTMG), 8411 to 8472 (TSSL…ISPD), 8604 to 8624 (MLRT…STSA), 8674 to 8741 (SPMA…TKVS), and 8775 to 8880 (TPLT…HSSP). Polar residues predominate over residues 8052 to 8078 (PSSNRTVTDVGTSSSGHESTSFVLADS). The segment covering 8319 to 8328 (TSSTSNLSST) has biased composition (low complexity). N-linked (GlcNAc...) asparagine glycosylation occurs at N8324. Over residues 8345-8389 (MQPSTHTAVTNVRTSISGHESQSSVLSDSETPKATSPMGTTYTMG) the composition is skewed to polar residues. A compositionally biased stretch (low complexity) spans 8607-8624 (TSSEPETSSPPNLSSTSA). N-linked (GlcNAc...) asparagine glycosylation is found at N8618 and N8684. 2 stretches are compositionally biased toward polar residues: residues 8674-8740 (SPMA…TTKV) and 8781-8810 (GSAE…SSRA). The span at 8850–8880 (TSPPSSLVSLSAVTSPSPLYSTPSESSHSSP) shows a compositional bias: low complexity. N8913 carries N-linked (GlcNAc...) asparagine glycosylation. Disordered regions lie at residues 8995–9018 (ESTS…SATK) and 9147–9168 (SLSS…DSIH). N9202 carries N-linked (GlcNAc...) asparagine glycosylation. Low complexity predominate over residues 9294-9307 (SISEETSSATEKST). Residues 9294–9460 (SISEETSSAT…TPSGSSHSSP (167 aa)) are disordered. 2 stretches are compositionally biased toward polar residues: residues 9308 to 9357 (VLSS…STPL) and 9374 to 9412 (SGAT…TTPM). The span at 9431–9460 (SPPSSLVSSSSVTSPSPLYSTPSGSSHSSP) shows a compositional bias: low complexity. N9493 carries an N-linked (GlcNAc...) asparagine glycan. Disordered stretches follow at residues 9611–9635 (ATPE…AQST), 9726–9753 (SSSS…SPSS), 9771–9791 (VLDT…STSV), and 9869–9890 (TEPT…ETTS). Positions 9621–9635 (MPSSRTSIPGPAQST) are enriched in polar residues. Composition is skewed to low complexity over residues 9774 to 9790 (TSSE…SSTS) and 9881 to 9890 (ETSTSEETTS). A glycan (N-linked (GlcNAc...) asparagine) is linked at N9785. N10075 and N10173 each carry an N-linked (GlcNAc...) asparagine glycan. Disordered stretches follow at residues 10175 to 10218 (SLDT…PPAS) and 10445 to 10469 (TIRP…TGGT). Over residues 10178–10193 (TSSVTPTNTPSSPGST) the composition is skewed to low complexity. Residues 10194 to 10212 (HLLQSSKTDFTSSAKTSSP) show a composition bias toward polar residues. The N-linked (GlcNAc...) asparagine glycan is linked to N10510. The segment covering 10544 to 10573 (SLGAETSTALPRTTPSVFNRESETTASLVS) has biased composition (polar residues). 2 disordered regions span residues 10544–10590 (SLGA…DVSS) and 10689–10719 (ETSS…PGAE). The N-linked (GlcNAc...) asparagine glycan is linked to N10700. The segment covering 10708 to 10719 (ATPSIATSPGAE) has biased composition (polar residues). N10749 carries an N-linked (GlcNAc...) asparagine glycan. A compositionally biased stretch (polar residues) spans 10849-10860 (TTPSMTTSHGAE). 3 disordered regions span residues 10849–10872 (TTPS…TVST), 10898–10926 (LSPG…TPTV), and 11003–11036 (LPTL…TVSP). Residues 10861–10872 (SSSAVPTPTVST) are compositionally biased toward low complexity. Over residues 11003-11018 (LPTLTLSPGEPETTPS) the composition is skewed to low complexity. The N-linked (GlcNAc...) asparagine glycan is linked to N11053. A disordered region spans residues 11072–11092 (SMATSHGAEASSAVPTPTVSP). N-linked (GlcNAc...) asparagine glycans are attached at residues N11224 and N11263. Composition is skewed to polar residues over residues 11269-11284 (HPAE…TSRF) and 11358-11381 (STTV…SIAT). Disordered regions lie at residues 11269–11301 (HPAE…SPEA), 11358–11400 (STTV…SPDV), 11508–11537 (KFSH…STTT), 11583–11724 (ETST…TSPR), 11836–11861 (SPTA…TSTM), and 11913–11937 (QTVT…FSRT). N11367 carries N-linked (GlcNAc...) asparagine glycosylation. Composition is skewed to polar residues over residues 11583–11594 (ETSTTVSGTIPN), 11631–11651 (VTSQ…TLTP), and 11658–11672 (TTAS…QTGF). Residue N11594 is glycosylated (N-linked (GlcNAc...) asparagine). Positions 11700 to 11717 (PVSRTTSSFSHSSPDATP) are enriched in low complexity. Composition is skewed to polar residues over residues 11849–11861 (PLST…TSTM) and 11913–11928 (QTVT…SVTS). Tandem repeats lie at residues 12067-12223 (AATV…PSPT), 12224-12381 (TAGP…PTIM), 12382-12537 (AAGP…PSPA), 12538-12692 (TAGP…PSPT), 12693-12848 (TAGP…PSPT), 12849-13004 (SAGP…PSPT), 13005-13160 (TAVP…PSPT), 13161-13316 (TTGP…PGPT), 13317-13472 (ATGP…SGPM), 13473-13628 (TASP…PGPS), 13629-13784 (AASP…FGPS), and 13785-13939 (AASH…RYMA). The segment at 12067–13939 (AATVPFMVPF…FTINNLRYMA (1873 aa)) is 12 X approximate tandem repeats. Residues 12072-12193 (FMVPFTLNFT…NSLYVNGFTH (122 aa)) form the SEA 1 domain. N-linked (GlcNAc...) asparagine glycans are attached at residues N12079, N12100, and N12116. C12126 and C12146 are joined by a disulfide. Residue N12168 is glycosylated (N-linked (GlcNAc...) asparagine). The disordered stretch occupies residues 12196 to 12226 (SMPTTSTPGTSTVDVGTSGTPSSSPSPTTAG). The 122-residue stretch at 12228 to 12349 (LLMPFTLNFT…NSLYVNGFTH (122 aa)) folds into the SEA 2 domain. N12235 and N12272 each carry an N-linked (GlcNAc...) asparagine glycan. C12282 and C12302 are joined by a disulfide. The interval 12353-12376 (VSTTSTPGTSTVDLRTSGTPSSLS) is disordered. SEA domains lie at 12386-12507 (LLVP…GFTH), 12542-12663 (LLVL…GFTH), and 12697-12818 (LLVP…GFTH). 3 N-linked (GlcNAc...) asparagine glycosylation sites follow: N12393, N12414, and N12430. An intrachain disulfide couples C12440 to C12460. N-linked (GlcNAc...) asparagine glycans are attached at residues N12549, N12570, and N12586. C12596 and C12616 are oxidised to a cystine. N-linked (GlcNAc...) asparagine glycans are attached at residues N12704, N12725, and N12741. The cysteines at positions 12751 and 12771 are disulfide-linked. A compositionally biased stretch (polar residues) spans 12819-12834 (QTSAPNTSTPGTSTVD). The tract at residues 12819–12849 (QTSAPNTSTPGTSTVDLGTSGTPSSLPSPTS) is disordered. The N-linked (GlcNAc...) asparagine glycan is linked to N12824. The span at 12835–12849 (LGTSGTPSSLPSPTS) shows a compositional bias: low complexity. The SEA 6 domain occupies 12853 to 12974 (LLVPFTLNFT…NSLYVNGFTH (122 aa)). 3 N-linked (GlcNAc...) asparagine glycosylation sites follow: N12860, N12881, and N12897. C12907 and C12927 are joined by a disulfide. Polar residues predominate over residues 12978 to 12990 (VAPTSTPGTSTVD). The tract at residues 12978 to 13003 (VAPTSTPGTSTVDLGTSGTPSSLPSP) is disordered. Over residues 12991-13003 (LGTSGTPSSLPSP) the composition is skewed to low complexity. SEA domains lie at 13009-13130 (LLVP…GFTH) and 13165-13286 (LLVP…GFTQ). N-linked (GlcNAc...) asparagine glycosylation is found at N13016, N13037, and N13053. C13063 and C13083 are oxidised to a cystine. N-linked (GlcNAc...) asparagine glycosylation is found at N13172 and N13193. C13219 and C13239 form a disulfide bridge. The span at 13291 to 13313 (PTTSTPGTFTVQPETSETPSSLP) shows a compositional bias: polar residues. The segment at 13291–13317 (PTTSTPGTFTVQPETSETPSSLPGPTA) is disordered. SEA domains lie at 13321-13442 (VLLP…GFTH) and 13477-13598 (LLVL…GFTQ). N-linked (GlcNAc...) asparagine glycans are attached at residues N13328, N13349, and N13365. C13375 and C13395 are disulfide-bonded. 3 N-linked (GlcNAc...) asparagine glycosylation sites follow: N13484, N13505, and N13521. The cysteines at positions 13531 and 13551 are disulfide-linked. A compositionally biased stretch (polar residues) spans 13603–13621 (PTTSIPGTPTVDLGTSGTP). The disordered stretch occupies residues 13603 to 13625 (PTTSIPGTPTVDLGTSGTPVSKP). SEA domains follow at residues 13633-13754 (LLVL…GFTH), 13789-13909 (LLIL…GFTH), 13922-14043 (SEEP…GYNE), and 14073-14193 (HLKT…GYAP). N-linked (GlcNAc...) asparagine glycans are attached at residues N13640 and N13661. C13687 and C13707 form a disulfide bridge. Residues N13733, N13744, N13796, N13816, N13832, N13929, and N13950 are each glycosylated (N-linked (GlcNAc...) asparagine). A disulfide bridge links C13976 with C13996. 2 N-linked (GlcNAc...) asparagine glycosylation sites follow: N14080 and N14100. The cysteines at positions 14126 and 14146 are disulfide-linked. N-linked (GlcNAc...) asparagine glycans are attached at residues N14195, N14212, N14254, N14287, N14326, and N14363. 2 consecutive SEA domains span residues 14198 to 14309 (IRGE…EMES) and 14319 to 14438 (STQH…GYSP). C14373 and C14393 are disulfide-bonded. 2 N-linked (GlcNAc...) asparagine glycosylation sites follow: N14417 and N14423. A helical transmembrane segment spans residues 14452-14472 (FWAVILIGLAGLLGVITCLIC). Topologically, residues 14473–14507 (GVLVTTRRRKKEGEYNVQQQCPGYYQSHLDLEDLQ) are cytoplasmic.

In terms of assembly, binds to MSLN. Binding to MSLN mediates heterotypic cell adhesion. This may contribute to the metastasis of ovarian cancer to the peritoneum by initiating cell attachment to the mesothelial epithelium via binding to MSLN. In terms of processing, heavily O-glycosylated; expresses both type 1 and type 2 core glycans. Heavily N-glycosylated; expresses primarily high mannose and complex bisecting type N-linked glycans. Post-translationally, may be phosphorylated. Phosphorylation of the intracellular C-terminal domain may induce proteolytic cleavage and the liberation of the extracellular domain into the extracellular space. In terms of processing, may contain numerous disulfide bridges. Association of several molecules of the secreted form may occur through interchain disulfide bridges providing an extraordinarily large gel-like matrix in the extracellular space or in the lumen of secretory ducts. As to expression, expressed in corneal and conjunctival epithelia (at protein level). Overexpressed in ovarian carcinomas and ovarian low malignant potential (LMP) tumors as compared to the expression in normal ovarian tissue and ovarian adenomas.

Its subcellular location is the cell membrane. It localises to the secreted. The protein resides in the extracellular space. Thought to provide a protective, lubricating barrier against particles and infectious agents at mucosal surfaces. In Homo sapiens (Human), this protein is Mucin-16.